The primary structure comprises 258 residues: uncharacterized protein (258 aa).

Solcar repeat units follow at residues 9–78 (KPIL…AKAR), 81–160 (PGVR…FKKK), and 165–246 (DHVF…VKSH). The next 6 helical transmembrane spans lie at 11 to 31 (ILVG…LSTI), 53 to 73 (GLSS…FVYE), 87 to 107 (LVSA…AEVV), 139 to 159 (MCGR…QFKK), 171 to 191 (PKGA…LDVI), and 218 to 239 (FEKG…YLGT).

It belongs to the mitochondrial carrier (TC 2.A.29) family.

The protein resides in the mitochondrion inner membrane. This is an uncharacterized protein from Schizosaccharomyces pombe (strain 972 / ATCC 24843) (Fission yeast).